Consider the following 215-residue polypeptide: Leucyl/phenylalanyl-tRNA--protein transferase (215 aa).

It belongs to the L/F-transferase family.

It is found in the cytoplasm. It catalyses the reaction N-terminal L-lysyl-[protein] + L-leucyl-tRNA(Leu) = N-terminal L-leucyl-L-lysyl-[protein] + tRNA(Leu) + H(+). The enzyme catalyses N-terminal L-arginyl-[protein] + L-leucyl-tRNA(Leu) = N-terminal L-leucyl-L-arginyl-[protein] + tRNA(Leu) + H(+). The catalysed reaction is L-phenylalanyl-tRNA(Phe) + an N-terminal L-alpha-aminoacyl-[protein] = an N-terminal L-phenylalanyl-L-alpha-aminoacyl-[protein] + tRNA(Phe). Its function is as follows. Functions in the N-end rule pathway of protein degradation where it conjugates Leu, Phe and, less efficiently, Met from aminoacyl-tRNAs to the N-termini of proteins containing an N-terminal arginine or lysine. The polypeptide is Leucyl/phenylalanyl-tRNA--protein transferase (Campylobacter jejuni subsp. jejuni serotype O:6 (strain 81116 / NCTC 11828)).